The sequence spans 304 residues: tRNA pseudouridine synthase B (304 aa).

The Nucleophile role is filled by D38.

This sequence belongs to the pseudouridine synthase TruB family. Type 1 subfamily.

It carries out the reaction uridine(55) in tRNA = pseudouridine(55) in tRNA. In terms of biological role, responsible for synthesis of pseudouridine from uracil-55 in the psi GC loop of transfer RNAs. In Listeria innocua serovar 6a (strain ATCC BAA-680 / CLIP 11262), this protein is tRNA pseudouridine synthase B.